The chain runs to 240 residues: Coatomer subunit delta (240 aa).

Positions 215 to 226 (AAAKASSAPKAK) are enriched in low complexity. A disordered region spans residues 215–240 (AAAKASSAPKAKGMQLGKKKNTSLLY). Over residues 231–240 (GKKKNTSLLY) the composition is skewed to basic residues.

Belongs to the adaptor complexes medium subunit family. Delta-COP subfamily. As to quaternary structure, oligomeric complex that consists of at least the alpha, beta, beta', gamma, delta, epsilon and zeta subunits.

It localises to the cytoplasm. Its subcellular location is the nucleus. Its function is as follows. The coatomer is a cytosolic protein complex that binds to dilysine motifs and reversibly associates with Golgi non-clathrin-coated vesicles, which further mediate biosynthetic protein transport from the ER, via the Golgi up to the trans Golgi network. Coatomer complex is required for budding from Golgi membranes, and is essential for the retrograde Golgi-to-ER transport of dilysine-tagged proteins. This Schizosaccharomyces pombe (strain 972 / ATCC 24843) (Fission yeast) protein is Coatomer subunit delta (ret2).